The chain runs to 91 residues: Potassium channel toxin BmTXK-beta-2 (91 aa).

A signal peptide spans 1–19 (MQRNLVVLLFLGMVALSSC). Positions 20 to 27 (GLREKHFQ) are excised as a propeptide. Residues 54-91 (QFGCPAYQGYCDDHCQDIKKEEGFCHGFKCKCGIPMGF) form the BetaSPN-type CS-alpha/beta domain. Intrachain disulfides connect cysteine 57–cysteine 78, cysteine 64–cysteine 83, and cysteine 68–cysteine 85.

Belongs to the long chain scorpion toxin family. Class 1 subfamily. Expressed by the venom gland.

Its subcellular location is the secreted. In terms of biological role, inhibits voltage-gated potassium channel. This is Potassium channel toxin BmTXK-beta-2 from Olivierus martensii (Manchurian scorpion).